We begin with the raw amino-acid sequence, 134 residues long: Large ribosomal subunit protein eL32 (134 aa).

The protein belongs to the eukaryotic ribosomal protein eL32 family.

In Tetrahymena thermophila (strain SB210), this protein is Large ribosomal subunit protein eL32 (RPL32).